Consider the following 650-residue polypeptide: Chaperone protein DnaK (650 aa).

The residue at position 200 (T200) is a Phosphothreonine; by autocatalysis. A disordered region spans residues 614-634 (AGAAGAAGAAEGAAHAGGAQQ).

The protein belongs to the heat shock protein 70 family.

In terms of biological role, acts as a chaperone. The sequence is that of Chaperone protein DnaK from Burkholderia cenocepacia (strain ATCC BAA-245 / DSM 16553 / LMG 16656 / NCTC 13227 / J2315 / CF5610) (Burkholderia cepacia (strain J2315)).